A 604-amino-acid polypeptide reads, in one-letter code: UvrABC system protein C (604 aa).

The GIY-YIG domain maps to 17–95 (SQPGVYRMLN…IKSLAPRYNI (79 aa)). One can recognise a UVR domain in the interval 204–239 (DEVLKTIEQKMFEASDRQAYEQAVLFRDQMQALRMI).

It belongs to the UvrC family. As to quaternary structure, interacts with UvrB in an incision complex.

The protein localises to the cytoplasm. The UvrABC repair system catalyzes the recognition and processing of DNA lesions. UvrC both incises the 5' and 3' sides of the lesion. The N-terminal half is responsible for the 3' incision and the C-terminal half is responsible for the 5' incision. This chain is UvrABC system protein C, found in Nitrosomonas eutropha (strain DSM 101675 / C91 / Nm57).